A 402-amino-acid polypeptide reads, in one-letter code: Enoyl-[acyl-carrier-protein] reductase [NADH] (402 aa).

Residues 48–53, 74–75, 111–112, and 140–141 contribute to the NAD(+) site; these read GASSGY, FE, DA, and LA. Position 226 (Tyr-226) interacts with substrate. Tyr-236 functions as the Proton donor in the catalytic mechanism. NAD(+) contacts are provided by residues Lys-245 and 274-276; that span reads VVT.

Belongs to the TER reductase family. As to quaternary structure, monomer.

It catalyses the reaction a 2,3-saturated acyl-[ACP] + NAD(+) = a (2E)-enoyl-[ACP] + NADH + H(+). It functions in the pathway lipid metabolism; fatty acid biosynthesis. Its function is as follows. Involved in the final reduction of the elongation cycle of fatty acid synthesis (FAS II). Catalyzes the reduction of a carbon-carbon double bond in an enoyl moiety that is covalently linked to an acyl carrier protein (ACP). This chain is Enoyl-[acyl-carrier-protein] reductase [NADH], found in Xanthomonas campestris pv. campestris (strain 8004).